We begin with the raw amino-acid sequence, 174 residues long: MRVFKDIVGYSHDELCSDAYPMTEINNGLIYEVQAKMVTIDLDVKVNTGANAASEETEEDEGVDNAGSKQVINVVDAMRLVETSFDKKSYTGYIKAYMKEVLAKLADNNPSRVDAFKKDAADFVKSVLGKFDEYKFYTGENMDADGHVALMYYKPGEVDPIFLYFKDGLESVKY.

Residues 1–174 (MRVFKDIVGY…FKDGLESVKY (174 aa)) enclose the TCTP domain.

The protein belongs to the TCTP family.

It is found in the cytoplasm. Functionally, involved in calcium binding and microtubule stabilization. This is Translationally-controlled tumor protein homolog 1 from Dictyostelium discoideum (Social amoeba).